The sequence spans 475 residues: LEC14B homolog (475 aa).

The tract at residues 1–34 (MSYRTRFGKDNSACDSGNAVEGSGSSKGPNEVSN) is disordered. The segment covering 23–33 (SGSSKGPNEVS) has biased composition (polar residues). WD repeat units lie at residues 211-240 (DEFG…YVYD), 252-283 (AHSS…KVWD), 299-329 (GHLE…QLWD), 375-411 (GHGV…YIYD), and 423-453 (HHEG…ARWE).

This sequence belongs to the WD repeat LEC14B family.

In Prunus armeniaca (Apricot), this protein is LEC14B homolog.